We begin with the raw amino-acid sequence, 715 residues long: L-type lectin-domain containing receptor kinase VIII.1 (715 aa).

Residues 1–21 (MSLFLSFFISILLCFFNGATT) form the signal peptide. The segment at 22 to 247 (TQFDFSTLAI…IHSIEWWSFS (226 aa)) is legume-lectin like. Residues 22–317 (TQFDFSTLAI…SRFCKENPGT (296 aa)) are Extracellular-facing. Asn-126 and Asn-195 each carry an N-linked (GlcNAc...) asparagine glycan. Positions 255–296 (GSGSGSPPPRANLMNPKANSVKSPPPLASQPSSSAIPISSNT) are disordered. The segment covering 283-296 (SQPSSSAIPISSNT) has biased composition (low complexity). Residues 318–338 (IAGVVTAGAFFLALFAGALFW) form a helical membrane-spanning segment. Residues 339-715 (VYSKKFKRVE…IIRSDDDHLV (377 aa)) lie on the Cytoplasmic side of the membrane. Residues 376-676 (FNESRIIGHG…MSFSTSHLLL (301 aa)) enclose the Protein kinase domain. ATP is bound by residues 382-390 (IGHGAFGVV) and Lys-405. Asp-500 (proton acceptor) is an active-site residue.

It in the C-terminal section; belongs to the protein kinase superfamily. Ser/Thr protein kinase family. This sequence in the N-terminal section; belongs to the leguminous lectin family.

It localises to the cell membrane. The enzyme catalyses L-seryl-[protein] + ATP = O-phospho-L-seryl-[protein] + ADP + H(+). The catalysed reaction is L-threonyl-[protein] + ATP = O-phospho-L-threonyl-[protein] + ADP + H(+). This is L-type lectin-domain containing receptor kinase VIII.1 (LECRK81) from Arabidopsis thaliana (Mouse-ear cress).